The sequence spans 146 residues: Putative pre-16S rRNA nuclease (146 aa).

It belongs to the YqgF nuclease family.

The protein resides in the cytoplasm. Functionally, could be a nuclease involved in processing of the 5'-end of pre-16S rRNA. This Pseudomonas savastanoi pv. phaseolicola (strain 1448A / Race 6) (Pseudomonas syringae pv. phaseolicola (strain 1448A / Race 6)) protein is Putative pre-16S rRNA nuclease.